A 215-amino-acid chain; its full sequence is Porin MspC (215 aa).

The N-terminal stretch at 1–31 (MKAISRVLIAMISALAAAVAGLFVSAGTSHA) is a signal peptide.

It belongs to the mycobacterial porin (TC 1.B.24) family. In terms of assembly, octamers. Probably forms a goblet with the wide end on the exterior of the outer membrane and a central channel. It is not known if mixed oligomers of MspC with other Msp subunits form in vivo.

The protein resides in the cell outer membrane. It localises to the secreted. It is found in the cell wall. Functionally, a constitutively expressed secondary porin, forms a water-filled channel which favors the permeation of cations and less efficiently phosphate. There are about 2400 porins in wild-type, 800 in an mspA deletion and 150 in a double mspA-mspC deletion. This chain is Porin MspC (mspC), found in Mycolicibacterium smegmatis (strain ATCC 700084 / mc(2)155) (Mycobacterium smegmatis).